The chain runs to 177 residues: ATP synthase subunit delta (177 aa).

This sequence belongs to the ATPase delta chain family. As to quaternary structure, F-type ATPases have 2 components, F(1) - the catalytic core - and F(0) - the membrane proton channel. F(1) has five subunits: alpha(3), beta(3), gamma(1), delta(1), epsilon(1). F(0) has three main subunits: a(1), b(2) and c(10-14). The alpha and beta chains form an alternating ring which encloses part of the gamma chain. F(1) is attached to F(0) by a central stalk formed by the gamma and epsilon chains, while a peripheral stalk is formed by the delta and b chains.

The protein localises to the cell inner membrane. Its function is as follows. F(1)F(0) ATP synthase produces ATP from ADP in the presence of a proton or sodium gradient. F-type ATPases consist of two structural domains, F(1) containing the extramembraneous catalytic core and F(0) containing the membrane proton channel, linked together by a central stalk and a peripheral stalk. During catalysis, ATP synthesis in the catalytic domain of F(1) is coupled via a rotary mechanism of the central stalk subunits to proton translocation. In terms of biological role, this protein is part of the stalk that links CF(0) to CF(1). It either transmits conformational changes from CF(0) to CF(1) or is implicated in proton conduction. This is ATP synthase subunit delta from Photorhabdus laumondii subsp. laumondii (strain DSM 15139 / CIP 105565 / TT01) (Photorhabdus luminescens subsp. laumondii).